Consider the following 126-residue polypeptide: Aspartate 1-decarboxylase (126 aa).

S25 acts as the Schiff-base intermediate with substrate; via pyruvic acid in catalysis. A Pyruvic acid (Ser) modification is found at S25. T57 is a substrate binding site. Residue Y58 is the Proton donor of the active site. A substrate-binding site is contributed by 73-75 (GSA).

This sequence belongs to the PanD family. Heterooctamer of four alpha and four beta subunits. Requires pyruvate as cofactor. Is synthesized initially as an inactive proenzyme, which is activated by self-cleavage at a specific serine bond to produce a beta-subunit with a hydroxyl group at its C-terminus and an alpha-subunit with a pyruvoyl group at its N-terminus.

Its subcellular location is the cytoplasm. The catalysed reaction is L-aspartate + H(+) = beta-alanine + CO2. It functions in the pathway cofactor biosynthesis; (R)-pantothenate biosynthesis; beta-alanine from L-aspartate: step 1/1. Its function is as follows. Catalyzes the pyruvoyl-dependent decarboxylation of aspartate to produce beta-alanine. The protein is Aspartate 1-decarboxylase of Chromobacterium violaceum (strain ATCC 12472 / DSM 30191 / JCM 1249 / CCUG 213 / NBRC 12614 / NCIMB 9131 / NCTC 9757 / MK).